Reading from the N-terminus, the 88-residue chain is UPF0298 protein BC_3932 (88 aa).

It belongs to the UPF0298 family.

Its subcellular location is the cytoplasm. The chain is UPF0298 protein BC_3932 from Bacillus cereus (strain ATCC 14579 / DSM 31 / CCUG 7414 / JCM 2152 / NBRC 15305 / NCIMB 9373 / NCTC 2599 / NRRL B-3711).